Consider the following 327-residue polypeptide: GMP reductase (327 aa).

C175 (thioimidate intermediate) is an active-site residue. 204–227 (IIADGGIRTNGDVAKSIRFGATMV) contributes to the NADP(+) binding site.

This sequence belongs to the IMPDH/GMPR family. GuaC type 2 subfamily.

The enzyme catalyses IMP + NH4(+) + NADP(+) = GMP + NADPH + 2 H(+). In terms of biological role, catalyzes the irreversible NADPH-dependent deamination of GMP to IMP. It functions in the conversion of nucleobase, nucleoside and nucleotide derivatives of G to A nucleotides, and in maintaining the intracellular balance of A and G nucleotides. This is GMP reductase from Bacillus cereus (strain ZK / E33L).